Consider the following 252-residue polypeptide: Phosphate import ATP-binding protein PstB (252 aa).

The region spanning 5–247 (VKIDKLNVHF…PEKKQTEDYI (243 aa)) is the ABC transporter domain. 37 to 44 (GPSGCGKS) lines the ATP pocket.

This sequence belongs to the ABC transporter superfamily. Phosphate importer (TC 3.A.1.7) family. The complex is composed of two ATP-binding proteins (PstB), two transmembrane proteins (PstC and PstA) and a solute-binding protein (PstS).

Its subcellular location is the cell inner membrane. The enzyme catalyses phosphate(out) + ATP + H2O = ADP + 2 phosphate(in) + H(+). Its function is as follows. Part of the ABC transporter complex PstSACB involved in phosphate import. Responsible for energy coupling to the transport system. This chain is Phosphate import ATP-binding protein PstB, found in Geobacter metallireducens (strain ATCC 53774 / DSM 7210 / GS-15).